The primary structure comprises 251 residues: Derlin-1 (251 aa).

Residue S2 is modified to N-acetylserine. The Cytoplasmic segment spans residues 2-15 (SDIGDWFRSIPAIT). A helical transmembrane segment spans residues 16-31 (RYWFAATVAVPLVGKL). Residues 32 to 69 (GLISPAYLFLWPEAFLYRFQIWRPITATFYFPVGPGTG) are Lumenal-facing. The chain crosses the membrane as a helical span at residues 70–89 (FLYLVNLYFLYQYSTRLETG). Topologically, residues 90–94 (AFDGR) are cytoplasmic. Residues 95–115 (PADYLFMLLFNWICIVITGLA) form a helical membrane-spanning segment. Over 116 to 122 (MDMQLLM) the chain is Lumenal. Residues 123–137 (IPLIMSVLYVWAQLN) traverse the membrane as a helical segment. At 138 to 154 (RDMIVSFWFGTRFKACY) the chain is on the cytoplasmic side. The helical transmembrane segment at 155-166 (LPWVILGFNYII) threads the bilayer. Residues 167 to 170 (GGSV) are Lumenal-facing. A helical transmembrane segment spans residues 171–189 (INELIGNLVGHLYFFLMFR). The Cytoplasmic portion of the chain corresponds to 190–251 (YPMDLGGRNF…WGQGFRLGDQ (62 aa)). Position 201 is a phosphoserine (S201). T202 is modified (phosphothreonine). Phosphoserine is present on S226. The segment at 229–251 (RAADQNGGGGRHNWGQGFRLGDQ) is disordered. An SHP-box motif is present at residues 241–248 (NWGQGFRL).

It belongs to the derlin family. As to quaternary structure, homotetramer. The four subunits of the tetramer are arranged in a twofold symmetry. Forms heterooligomers with DERL2 and DERL3; binding to DERL3 is poorer than that between DERL2 and DERL3. Interacts (via SHP-box motif) with VCP. Interacts with AMFR, SELENOS, SEL1L, SELENOK and SYVN1, as well as with SEL1L-SYVN1 and VCP-SELENOS protein complexes; this interaction is weaker than that observed between DERL2 and these complexes. Interacts with NGLY1 and YOD1. Does not bind to EDEM1. Interacts with DNAJB9. Interacts with RNF103. Interacts with HM13. Interacts with XBP1 isoform 1 (via luminal/ectodomain domain); the interaction obviates the need for ectodomain shedding prior HM13/SPP-mediated XBP1 isoform 1 cleavage. Interacts with the signal recognition particle/SRP and the SRP receptor; in the process of endoplasmic reticulum stress-induced pre-emptive quality control. May interact with UBXN6. Interacts with ZFAND2B; probably through VCP. Interacts with CCDC47. Interacts with C18orf32. May interact with TRAM1. Forms a complex with SVIP and VCP/p97. (Microbial infection) Interacts with the cytomegalovirus US11 protein. As to expression, ubiquitous.

The protein localises to the endoplasmic reticulum membrane. Functionally, functional component of endoplasmic reticulum-associated degradation (ERAD) for misfolded lumenal proteins. Forms homotetramers which encircle a large channel traversing the endoplasmic reticulum (ER) membrane. This allows the retrotranslocation of misfolded proteins from the ER into the cytosol where they are ubiquitinated and degraded by the proteasome. The channel has a lateral gate within the membrane which provides direct access to membrane proteins with no need to reenter the ER lumen first. May mediate the interaction between VCP and the misfolded protein. Also involved in endoplasmic reticulum stress-induced pre-emptive quality control, a mechanism that selectively attenuates the translocation of newly synthesized proteins into the endoplasmic reticulum and reroutes them to the cytosol for proteasomal degradation. By controlling the steady-state expression of the IGF1R receptor, indirectly regulates the insulin-like growth factor receptor signaling pathway. Its function is as follows. (Microbial infection) In case of infection by cytomegaloviruses, it plays a central role in the export from the ER and subsequent degradation of MHC class I heavy chains via its interaction with US11 viral protein, which recognizes and associates with MHC class I heavy chains. Also participates in the degradation process of misfolded cytomegalovirus US2 protein. This is Derlin-1 from Homo sapiens (Human).